A 549-amino-acid polypeptide reads, in one-letter code: Glucose-6-phosphate isomerase (549 aa).

E355 (proton donor) is an active-site residue. Active-site residues include H386 and K514.

It belongs to the GPI family.

The protein localises to the cytoplasm. It carries out the reaction alpha-D-glucose 6-phosphate = beta-D-fructose 6-phosphate. It participates in carbohydrate biosynthesis; gluconeogenesis. Its pathway is carbohydrate degradation; glycolysis; D-glyceraldehyde 3-phosphate and glycerone phosphate from D-glucose: step 2/4. Catalyzes the reversible isomerization of glucose-6-phosphate to fructose-6-phosphate. The protein is Glucose-6-phosphate isomerase of Salmonella arizonae (strain ATCC BAA-731 / CDC346-86 / RSK2980).